Here is a 503-residue protein sequence, read N- to C-terminus: Aromatase 1 (503 aa).

Cys437 contributes to the heme binding site.

It belongs to the cytochrome P450 family. It depends on heme as a cofactor.

The protein resides in the membrane. The enzyme catalyses testosterone + 3 reduced [NADPH--hemoprotein reductase] + 3 O2 = 17beta-estradiol + formate + 3 oxidized [NADPH--hemoprotein reductase] + 4 H2O + 4 H(+). The catalysed reaction is androst-4-ene-3,17-dione + 3 reduced [NADPH--hemoprotein reductase] + 3 O2 = estrone + formate + 3 oxidized [NADPH--hemoprotein reductase] + 4 H2O + 4 H(+). Catalyzes the formation of aromatic C18 estrogens from C19 androgens. The polypeptide is Aromatase 1 (CYP19A1) (Sus scrofa (Pig)).